The primary structure comprises 291 residues: 4-hydroxy-tetrahydrodipicolinate synthase (291 aa).

Thr44 serves as a coordination point for pyruvate. Catalysis depends on Tyr132, which acts as the Proton donor/acceptor. Lys160 acts as the Schiff-base intermediate with substrate in catalysis. A pyruvate-binding site is contributed by Val202.

It belongs to the DapA family. In terms of assembly, homotetramer; dimer of dimers.

It localises to the cytoplasm. It carries out the reaction L-aspartate 4-semialdehyde + pyruvate = (2S,4S)-4-hydroxy-2,3,4,5-tetrahydrodipicolinate + H2O + H(+). It functions in the pathway amino-acid biosynthesis; L-lysine biosynthesis via DAP pathway; (S)-tetrahydrodipicolinate from L-aspartate: step 3/4. Catalyzes the condensation of (S)-aspartate-beta-semialdehyde [(S)-ASA] and pyruvate to 4-hydroxy-tetrahydrodipicolinate (HTPA). This chain is 4-hydroxy-tetrahydrodipicolinate synthase, found in Clostridium perfringens (strain ATCC 13124 / DSM 756 / JCM 1290 / NCIMB 6125 / NCTC 8237 / Type A).